A 383-amino-acid chain; its full sequence is N-acetyldiaminopimelate deacetylase (383 aa).

D72 is a catalytic residue. Residue E131 is the Proton acceptor of the active site.

The protein belongs to the peptidase M20A family. N-acetyldiaminopimelate deacetylase subfamily.

The enzyme catalyses N-acetyl-(2S,6S)-2,6-diaminopimelate + H2O = (2S,6S)-2,6-diaminopimelate + acetate. It participates in amino-acid biosynthesis; L-lysine biosynthesis via DAP pathway; LL-2,6-diaminopimelate from (S)-tetrahydrodipicolinate (acetylase route): step 3/3. Functionally, catalyzes the conversion of N-acetyl-diaminopimelate to diaminopimelate and acetate. The sequence is that of N-acetyldiaminopimelate deacetylase from Lacticaseibacillus paracasei (strain ATCC 334 / BCRC 17002 / CCUG 31169 / CIP 107868 / KCTC 3260 / NRRL B-441) (Lactobacillus paracasei).